A 374-amino-acid polypeptide reads, in one-letter code: Heme A synthase (374 aa).

Residues 1–22 are disordered; that stretch reads MSDHIRAASSPSRHGSEHGWQH. 5 helical membrane passes run 32–52, 118–138, 149–169, 184–204, and 226–246; these read ILVA…VMLG, RLWG…LAVT, LILI…MVAS, VVHL…ALSV, and LGLV…HAGL. His-281 lines the heme pocket. The next 3 membrane-spanning stretches (helical) occupy residues 283 to 300, 309 to 329, and 332 to 352; these read LLAT…LIGF, AVLP…ATLL, and VAVP…TAAI. His-340 lines the heme pocket.

Belongs to the COX15/CtaA family. Type 2 subfamily. As to quaternary structure, interacts with CtaB. The cofactor is heme b.

It localises to the cell membrane. The enzyme catalyses Fe(II)-heme o + 2 A + H2O = Fe(II)-heme a + 2 AH2. Its pathway is porphyrin-containing compound metabolism; heme A biosynthesis; heme A from heme O: step 1/1. Its function is as follows. Catalyzes the conversion of heme O to heme A by two successive hydroxylations of the methyl group at C8. The first hydroxylation forms heme I, the second hydroxylation results in an unstable dihydroxymethyl group, which spontaneously dehydrates, resulting in the formyl group of heme A. The protein is Heme A synthase of Granulibacter bethesdensis (strain ATCC BAA-1260 / CGDNIH1).